The sequence spans 307 residues: tRNA pseudouridine synthase B (307 aa).

The active-site Nucleophile is Asp38.

The protein belongs to the pseudouridine synthase TruB family. Type 1 subfamily.

It carries out the reaction uridine(55) in tRNA = pseudouridine(55) in tRNA. Responsible for synthesis of pseudouridine from uracil-55 in the psi GC loop of transfer RNAs. This chain is tRNA pseudouridine synthase B, found in Bacillus cereus (strain ATCC 10987 / NRS 248).